The following is a 159-amino-acid chain: MFIFNSIADDIFPLISCVGAIHCNILAIRTGNDFAAIKLQVIKLIYLMIWHSLVIISPVVTLAFFPASLKQGSLHFLLIIYFVLLLTPWLEFSKSGTHLPSNTKIIPAWWVSMDAYLNHASICCHQFSCLSAVKLQLSNEELIRDTRWDIQSYTTDFSF.

Helical transmembrane passes span 1–21 (MFIFNSIADDIFPLISCVGAI), 45–65 (IYLMIWHSLVIISPVVTLAFF), and 72–92 (GSLHFLLIIYFVLLLTPWLEF).

This sequence belongs to the XK family. Testis specific.

It is found in the membrane. The chain is Testis-specific XK-related protein, Y-linked (XKRY) from Homo sapiens (Human).